Here is a 323-residue protein sequence, read N- to C-terminus: tRNA U34 carboxymethyltransferase (323 aa).

Residues K91, W105, K110, G130, 152-154, 181-182, M196, Y200, and R315 each bind carboxy-S-adenosyl-L-methionine; these read DPT and IE.

It belongs to the class I-like SAM-binding methyltransferase superfamily. CmoB family. As to quaternary structure, homotetramer.

The catalysed reaction is carboxy-S-adenosyl-L-methionine + 5-hydroxyuridine(34) in tRNA = 5-carboxymethoxyuridine(34) in tRNA + S-adenosyl-L-homocysteine + H(+). Catalyzes carboxymethyl transfer from carboxy-S-adenosyl-L-methionine (Cx-SAM) to 5-hydroxyuridine (ho5U) to form 5-carboxymethoxyuridine (cmo5U) at position 34 in tRNAs. The polypeptide is tRNA U34 carboxymethyltransferase (Shigella flexneri serotype 5b (strain 8401)).